The primary structure comprises 924 residues: Ubiquitin carboxyl-terminal hydrolase 15 (924 aa).

8 residues coordinate Zn(2+): Cys130, Cys133, Cys141, Cys144, Cys150, Cys154, His163, and Cys167. The segment at 130–167 (CARCFGPAKTRCSRCKSVRYCSGKCQIIHWRVAHKDEC) adopts an MYND-type zinc-finger fold. Over residues 226–236 (DITPQINTQGR) the composition is skewed to polar residues. Disordered regions lie at residues 226–301 (DITP…VDSS) and 317–366 (SHKH…TSKK). Positions 247–256 (ANRESCRRDS) are enriched in basic and acidic residues. Residues 331-362 (GCPNTQYPSNGTRTATLPRTGINKSGEQSCTE) are compositionally biased toward polar residues. The USP domain maps to 438 to 744 (RGLVNCGNSC…GAYMLFYMRS (307 aa)). Catalysis depends on Cys447, which acts as the Nucleophile. The active-site Proton acceptor is the His703. Residues 750-793 (RGEHNGKAPVHHSQPRNEMKEQRKPVNRFKPRADHKNTESSSSE) form a disordered region. Positions 764-773 (PRNEMKEQRK) are enriched in basic and acidic residues.

It belongs to the peptidase C19 family. In terms of assembly, interacts with DA1. Highly expressed in rosette leaves and inflorescence. Expressed at low levels in cotyledons, stems, cauline leaves and siliques.

Its subcellular location is the cytoplasm. The protein resides in the nucleus. It carries out the reaction Thiol-dependent hydrolysis of ester, thioester, amide, peptide and isopeptide bonds formed by the C-terminal Gly of ubiquitin (a 76-residue protein attached to proteins as an intracellular targeting signal).. Functionally, recognizes and hydrolyzes the peptide bond at the C-terminal Gly of ubiquitin. Involved in the processing of poly-ubiquitin precursors as well as that of ubiquitinated proteins. Involved in the regulation of organ size. Acts as a positive regulator of cell proliferation. Possesses deubiquitinating enzyme activity in vitro. The enzyme activity of UBP15 is required for its function in regulation of cell proliferation. Functions antagonistically in a common pathway with DA1 to regulate seed size. Acts maternally to regulate seed size by promoting cell proliferation in the integuments of ovules and developing seeds. Functions independently of DA2 and BB. In Arabidopsis thaliana (Mouse-ear cress), this protein is Ubiquitin carboxyl-terminal hydrolase 15.